Here is a 197-residue protein sequence, read N- to C-terminus: NADH-quinone oxidoreductase subunit B (197 aa).

[4Fe-4S] cluster contacts are provided by Cys-76, Cys-77, Cys-141, and Cys-171.

This sequence belongs to the complex I 20 kDa subunit family. In terms of assembly, NDH-1 is composed of 14 different subunits. Subunits NuoB, C, D, E, F, and G constitute the peripheral sector of the complex. [4Fe-4S] cluster serves as cofactor.

The protein resides in the cell inner membrane. It carries out the reaction a quinone + NADH + 5 H(+)(in) = a quinol + NAD(+) + 4 H(+)(out). NDH-1 shuttles electrons from NADH, via FMN and iron-sulfur (Fe-S) centers, to quinones in the respiratory chain. The immediate electron acceptor for the enzyme in this species is believed to be ubiquinone. Couples the redox reaction to proton translocation (for every two electrons transferred, four hydrogen ions are translocated across the cytoplasmic membrane), and thus conserves the redox energy in a proton gradient. The sequence is that of NADH-quinone oxidoreductase subunit B from Methylobacterium nodulans (strain LMG 21967 / CNCM I-2342 / ORS 2060).